The following is a 97-amino-acid chain: Peptide YY (97 aa).

An N-terminal signal peptide occupies residues Met1–Ala28. The residue at position 41 (Ser41) is a Phosphoserine. Tyr64 is subject to Tyrosine amide. The tract at residues Gly65–Trp97 is disordered. A propeptide spanning residues Asp68–Trp97 is cleaved from the precursor. Over residues Gly82–Trp97 the composition is skewed to basic and acidic residues.

It belongs to the NPY family. In terms of processing, the peptide YY form is cleaved at Pro-30 by the prolyl endopeptidase FAP (seprase) activity (in vitro) to generate peptide YY(3-36).

The protein localises to the secreted. This gut peptide inhibits exocrine pancreatic secretion, has a vasoconstrictory action and inhibitis jejunal and colonic mobility. This Homo sapiens (Human) protein is Peptide YY (PYY).